Reading from the N-terminus, the 159-residue chain is Ribosomal RNA large subunit methyltransferase H (159 aa).

Residues Leu-76, Gly-107, and 126-131 (LSKLTM) contribute to the S-adenosyl-L-methionine site.

Belongs to the RNA methyltransferase RlmH family. As to quaternary structure, homodimer.

It is found in the cytoplasm. It carries out the reaction pseudouridine(1915) in 23S rRNA + S-adenosyl-L-methionine = N(3)-methylpseudouridine(1915) in 23S rRNA + S-adenosyl-L-homocysteine + H(+). In terms of biological role, specifically methylates the pseudouridine at position 1915 (m3Psi1915) in 23S rRNA. This Acinetobacter baylyi (strain ATCC 33305 / BD413 / ADP1) protein is Ribosomal RNA large subunit methyltransferase H.